A 221-amino-acid polypeptide reads, in one-letter code: Catechol O-methyltransferase (221 aa).

S-adenosyl-L-methionine contacts are provided by Val-41, Gly-65, Leu-67, Ser-71, Glu-89, His-94, Ala-118, and Asp-139. The Mg(2+) site is built by Asp-139, Asp-165, and Asn-166.

This sequence belongs to the class I-like SAM-binding methyltransferase superfamily. Cation-dependent O-methyltransferase family. Homodimer. The cofactor is Mg(2+).

It carries out the reaction a catechol + S-adenosyl-L-methionine = a guaiacol + S-adenosyl-L-homocysteine + H(+). Its activity is regulated as follows. The metal ion affects the meta and para-regiospecificity of the enzyme as well as the enzyme activity and thermal stability. Functionally, catechol O-methyltransferase that can use various catechol-like compounds. Can produce vanillic acid (meta-form) and iso-vanillic acid (para-form) from protocatechuic acid (PCA). Does not have a regiospecificity, and produces the meta- and para-forms of the products in equal proportion. The chain is Catechol O-methyltransferase from Niastella koreensis (strain DSM 17620 / KACC 11465 / NBRC 106392 / GR20-10).